Consider the following 333-residue polypeptide: Phosphate acyltransferase (333 aa).

This sequence belongs to the PlsX family. In terms of assembly, homodimer. Probably interacts with PlsY.

The protein resides in the cytoplasm. It carries out the reaction a fatty acyl-[ACP] + phosphate = an acyl phosphate + holo-[ACP]. It participates in lipid metabolism; phospholipid metabolism. Its function is as follows. Catalyzes the reversible formation of acyl-phosphate (acyl-PO(4)) from acyl-[acyl-carrier-protein] (acyl-ACP). This enzyme utilizes acyl-ACP as fatty acyl donor, but not acyl-CoA. This chain is Phosphate acyltransferase, found in Lactobacillus acidophilus (strain ATCC 700396 / NCK56 / N2 / NCFM).